Consider the following 650-residue polypeptide: DNA gyrase subunit B (650 aa).

Positions 400-414 are enriched in basic and acidic residues; sequence RRSQEARELTRRKSP. The tract at residues 400–422 is disordered; that stretch reads RRSQEARELTRRKSPFDSGSLPG. The region spanning 435 to 549 is the Toprim domain; sequence SELYIVEGDS…QGNIYIAQPP (115 aa). Glu-441, Asp-514, and Asp-516 together coordinate Mg(2+).

The protein belongs to the type II topoisomerase GyrB family. In terms of assembly, heterotetramer, composed of two GyrA and two GyrB chains. In the heterotetramer, GyrA contains the active site tyrosine that forms a transient covalent intermediate with DNA, while GyrB binds cofactors and catalyzes ATP hydrolysis. Mg(2+) is required as a cofactor. Requires Mn(2+) as cofactor. The cofactor is Ca(2+).

It localises to the cytoplasm. It catalyses the reaction ATP-dependent breakage, passage and rejoining of double-stranded DNA.. Functionally, a type II topoisomerase that negatively supercoils closed circular double-stranded (ds) DNA in an ATP-dependent manner to modulate DNA topology and maintain chromosomes in an underwound state. Negative supercoiling favors strand separation, and DNA replication, transcription, recombination and repair, all of which involve strand separation. Also able to catalyze the interconversion of other topological isomers of dsDNA rings, including catenanes and knotted rings. Type II topoisomerases break and join 2 DNA strands simultaneously in an ATP-dependent manner. The protein is DNA gyrase subunit B of Mycoplasma pneumoniae (strain ATCC 29342 / M129 / Subtype 1) (Mycoplasmoides pneumoniae).